A 261-amino-acid polypeptide reads, in one-letter code: Glucose 1-dehydrogenase A (261 aa).

Residue valine 11–valine 35 coordinates NADP(+). Serine 145 serves as a coordination point for substrate. Catalysis depends on tyrosine 158, which acts as the Proton acceptor.

The protein belongs to the short-chain dehydrogenases/reductases (SDR) family. As to quaternary structure, homotetramer.

It catalyses the reaction D-glucose + NAD(+) = D-glucono-1,5-lactone + NADH + H(+). The enzyme catalyses D-glucose + NADP(+) = D-glucono-1,5-lactone + NADPH + H(+). This Priestia megaterium (Bacillus megaterium) protein is Glucose 1-dehydrogenase A (gdhA).